The sequence spans 427 residues: Putative tyrosine recombinase XerC (427 aa).

Positions 1–81 (MTPQQLTEEY…HLRTIWGYAI (81 aa)) constitute a Core-binding (CB) domain. The 190-residue stretch at 116–305 (RARSWLSMQV…DYDHMRAVLH (190 aa)) folds into the Tyr recombinase domain. Active-site residues include arginine 156, lysine 183, histidine 256, arginine 259, and histidine 283. Tyrosine 292 acts as the O-(3'-phospho-DNA)-tyrosine intermediate in catalysis. Disordered stretches follow at residues 323–384 (SGSP…PPDT) and 401–427 (RAATASAVPAATSGSGGRGSAARDSLA). Over residues 350–362 (ARTEPSEPREHTQ) the composition is skewed to basic and acidic residues. Positions 402–413 (AATASAVPAATS) are enriched in low complexity.

Belongs to the 'phage' integrase family.

It localises to the cytoplasm. Site-specific tyrosine recombinase, which acts by catalyzing the cutting and rejoining of the recombining DNA molecules. The sequence is that of Putative tyrosine recombinase XerC from Pseudomonas aeruginosa.